Consider the following 318-residue polypeptide: Basic leucine zipper (bZIP) transcription factor atfB (318 aa).

The tract at residues 114-157 (FNSSPPEYAPPKHRSSLSEQSQTDGYGVSTRRRKASAIDQCEQQ) is disordered. A basic motif region spans residues 160 to 199 (REKREKFLERNRLAASKCRQKKKEHTKLLETRFREVSNKK). In terms of domain architecture, bZIP spans 160-223 (REKREKFLER…LNLKNEMLRH (64 aa)). Positions 202–216 (LESEIEHLRSEVLNL) are leucine-zipper. The tract at residues 275–301 (DGPMQLPSEMGSPLDQRRDSEQSIMTE) is disordered.

This sequence belongs to the bZIP family. ATF subfamily.

It localises to the nucleus. In terms of biological role, transcription factor that acts as a key player in the regulatory circuit that integrates secondary metabolism and cellular response to oxidative stress. Regulates the genes involved in development and stress response through direct binding to their promoters. The sequence is that of Basic leucine zipper (bZIP) transcription factor atfB from Aspergillus flavus (strain ATCC 200026 / FGSC A1120 / IAM 13836 / NRRL 3357 / JCM 12722 / SRRC 167).